The chain runs to 349 residues: Alanine racemase (349 aa).

The active-site Proton acceptor; specific for D-alanine is Lys-35. At Lys-35 the chain carries N6-(pyridoxal phosphate)lysine. Arg-130 lines the substrate pocket. Catalysis depends on Tyr-244, which acts as the Proton acceptor; specific for L-alanine. Met-292 is a substrate binding site.

It belongs to the alanine racemase family. Pyridoxal 5'-phosphate is required as a cofactor.

The catalysed reaction is L-alanine = D-alanine. It functions in the pathway amino-acid biosynthesis; D-alanine biosynthesis; D-alanine from L-alanine: step 1/1. Catalyzes the interconversion of L-alanine and D-alanine. May also act on other amino acids. This chain is Alanine racemase (alr), found in Cereibacter sphaeroides (strain KD131 / KCTC 12085) (Rhodobacter sphaeroides).